The primary structure comprises 383 residues: Opsin Rh3 (383 aa).

At 1–57 the chain is on the extracellular side; sequence MESGNVSSSLFGNVSTALRPEARLSAETRLLGWNVPPEELRHIPEHWLTYPEPPESM. N-linked (GlcNAc...) asparagine glycosylation occurs at asparagine 13. The chain crosses the membrane as a helical span at residues 58 to 82; that stretch reads NYLLGTLYIFFTLMSMLGNGLVIWV. Residues 83–94 lie on the Cytoplasmic side of the membrane; that stretch reads FSAAKSLRTPSN. A helical membrane pass occupies residues 95–119; sequence ILVINLAFCDFMMMVKTPIFIYNSF. The Extracellular segment spans residues 120–133; it reads HQGYALGHLGCQIF. Cysteine 130 and cysteine 207 are disulfide-bonded. Residues 134 to 153 form a helical membrane-spanning segment; the sequence is GIIGSYTGIAAGATNAFIAY. Residues 154–171 are Cytoplasmic-facing; sequence DRFNVITRPMEGKMTHGK. A helical transmembrane segment spans residues 172-196; the sequence is AIAMIIFIYMYATPWVVACYTETWG. Over 197–220 the chain is Extracellular; the sequence is RFVPEGYLTSCTFDYLTDNFDTRL. A helical transmembrane segment spans residues 221-248; it reads FVACIFFFSFVCPTTMITYYYSQIVGHV. The Cytoplasmic portion of the chain corresponds to 249–284; the sequence is FSHEKALRDQAKKMNVESLRSNVDKNKETAEIRIAK. Residues 285 to 308 form a helical membrane-spanning segment; it reads AAITICFLFFCSWTPYGVMSLIGA. Residues 309–316 lie on the Extracellular side of the membrane; the sequence is FGDKTLLT. Residues 317 to 341 form a helical membrane-spanning segment; sequence PGATMIPACACKMVACIDPFVYAIS. Lysine 328 carries the N6-(retinylidene)lysine modification. The Cytoplasmic segment spans residues 342–383; sequence HPRYRMELQKRCPWLALNEKAPESSAVASTSTTQEPQQTTAA. Residues 362–383 form a disordered region; the sequence is APESSAVASTSTTQEPQQTTAA. A compositionally biased stretch (low complexity) spans 369–383; the sequence is ASTSTTQEPQQTTAA.

It belongs to the G-protein coupled receptor 1 family. Opsin subfamily. In terms of processing, phosphorylated on some or all of the serine and threonine residues present in the C-terminal region.

It localises to the membrane. In terms of biological role, visual pigments are the light-absorbing molecules that mediate vision. They consist of an apoprotein, opsin, covalently linked to cis-retinal. In Drosophila melanogaster (Fruit fly), this protein is Opsin Rh3 (Rh3).